The sequence spans 196 residues: ATP-dependent Clp protease proteolytic subunit (196 aa).

The Nucleophile role is filled by S101. The active site involves H126.

The protein belongs to the peptidase S14 family. As to quaternary structure, component of the chloroplastic Clp protease core complex.

It is found in the plastid. It localises to the chloroplast stroma. It carries out the reaction Hydrolysis of proteins to small peptides in the presence of ATP and magnesium. alpha-casein is the usual test substrate. In the absence of ATP, only oligopeptides shorter than five residues are hydrolyzed (such as succinyl-Leu-Tyr-|-NHMec, and Leu-Tyr-Leu-|-Tyr-Trp, in which cleavage of the -Tyr-|-Leu- and -Tyr-|-Trp bonds also occurs).. Functionally, cleaves peptides in various proteins in a process that requires ATP hydrolysis. Has a chymotrypsin-like activity. Plays a major role in the degradation of misfolded proteins. The polypeptide is ATP-dependent Clp protease proteolytic subunit (Gossypium barbadense (Sea Island cotton)).